Reading from the N-terminus, the 133-residue chain is Minor capsid protein VP2 (133 aa).

It belongs to the vesivirus VP2 protein family. In terms of assembly, homooligomer. The portal-like structure consists in 12 copies of VP2. Interacts with capsid protein VP1.

Its subcellular location is the virion. It localises to the host cytoplasm. In terms of biological role, minor structural protein that forms a portal-like structure at a unique three-fold axis of symmetry, following binding to the host receptor. The channel formed by VP2 may allow the delivery of the viral genome through the host endosomal membrane. This is Minor capsid protein VP2 from Canis lupus familiaris (Dog).